Here is a 410-residue protein sequence, read N- to C-terminus: MAREKFERKKPHINIGTIGHVDHGKTTLTAAITMALAVGTGKSGKRYDEIDAAPEEKARGITINTAHVEYETETRHYAHVDCPGHADYVKNMITGAAQMDGAILVVSGADGPMPQTKEHILLAKQVGVPNMVVFLNKEDQVDDPELLELVELEVRETLNSYDFPGDEIPVVAGSALMALEALTQDSKLARGSNPWVDKIYALMDQVDKYIPTPQRDTDKPFLMAIEDVFSITGRGTVATGRVERGKVVVGENVDIVGLANIPQNTTVTGLEMFQKTLEESVAGDNVGVLLRGIQKDQVERGMVLAKPNTIKPHIRFESEVYVLAKEEGGRHTPFFPGYRPQFYVRTTDVTGKIDSFKADDGSDTQMVMPGDRVKMVVSLIQPIAIEKGMRFAIREGGRTVGAGIVSEILE.

The tr-type G domain occupies 10-214 (KPHINIGTIG…QVDKYIPTPQ (205 aa)). Residues 19 to 26 (GHVDHGKT) form a G1 region. 19–26 (GHVDHGKT) provides a ligand contact to GTP. Threonine 26 is a binding site for Mg(2+). A G2 region spans residues 60-64 (GITIN). Residues 81 to 84 (DCPG) are G3. GTP contacts are provided by residues 81 to 85 (DCPGH) and 136 to 139 (NKED). The G4 stretch occupies residues 136-139 (NKED). Residues 174–176 (SAL) are G5.

This sequence belongs to the TRAFAC class translation factor GTPase superfamily. Classic translation factor GTPase family. EF-Tu/EF-1A subfamily.

It localises to the plastid. It is found in the chloroplast. The enzyme catalyses GTP + H2O = GDP + phosphate + H(+). Functionally, GTP hydrolase that promotes the GTP-dependent binding of aminoacyl-tRNA to the A-site of ribosomes during protein biosynthesis. This is Elongation factor Tu, chloroplastic (tufA) from Mesostigma viride (Green alga).